The chain runs to 176 residues: Parathyroid hormone-related protein (176 aa).

The N-terminal stretch at methionine 1–glycine 25 is a signal peptide. Positions arginine 26–arginine 37 are excised as a propeptide. The important for receptor binding stretch occupies residues arginine 58–asparagine 69. Positions threonine 76–asparagine 157 are disordered. Composition is skewed to polar residues over residues serine 77–asparagine 91 and threonine 106–lysine 116. A Nuclear localization signal motif is present at residues threonine 109–lysine 130. Residues serine 123–lysine 133 are compositionally biased toward basic residues.

This sequence belongs to the parathyroid hormone family.

The protein resides in the secreted. The protein localises to the cytoplasm. It localises to the nucleus. Neuroendocrine peptide which is a critical regulator of cellular and organ growth, development, migration, differentiation and survival and of epithelial calcium ion transport. Acts by binding to its receptor, PTH1R, activating G protein-coupled receptor signaling. Regulates endochondral bone development and epithelial-mesenchymal interactions during the formation of the mammary glands and teeth. Required for skeletal homeostasis. In terms of biological role, potent inhibitor of osteoclastic bone resorption. The polypeptide is Parathyroid hormone-related protein (PTHLH) (Gallus gallus (Chicken)).